The chain runs to 1021 residues: Collagen alpha-1(I) chain (1021 aa).

A disordered region spans residues 1–1021 (DEKSAGGISV…PGPPGPPGPP (1021 aa)). Residue lysine 3 is modified to Allysine. Residue serine 4 is modified to Phosphoserine. 11 positions are modified to 4-hydroxyproline: proline 23, proline 26, proline 29, proline 38, proline 41, proline 44, proline 59, proline 74, proline 80, proline 89, and proline 95. The segment covering 31–50 (PQGFQGPPGEPGEPGASGPM) has biased composition (low complexity). The span at 62 to 76 (NGDDGEAGKPGRPGE) shows a compositional bias: basic and acidic residues. The residue at position 98 (lysine 98) is a 5-hydroxylysine; alternate. A glycan (O-linked (Gal...) hydroxylysine; alternate) is linked at lysine 98. Serine 104 is subject to Phosphoserine. Positions 112–128 (DAGPAGPKGEPGSPGEN) are enriched in low complexity. A 4-hydroxyproline mark is found at proline 122, proline 125, proline 131, proline 140, proline 146, proline 167, proline 176, proline 179, proline 206, proline 209, proline 221, proline 227, proline 236, proline 242, proline 245, and proline 260. A compositionally biased stretch (low complexity) spans 146–164 (PGASGPAGARGNDGATGAA). Residues 166–178 (PPGPTGPAGPPGF) show a composition bias toward pro residues. The segment covering 212–262 (AGAAGPAGNPGADGQPGAKGANGAPGIAGAPGFPGARGPSGPQGPSGAPGP) has biased composition (low complexity). Lysine 263 is subject to 5-hydroxylysine. Residues proline 269, proline 272, proline 284, proline 293, proline 308, proline 314, proline 323, and proline 329 each carry the 4-hydroxyproline modification. A compositionally biased stretch (gly residues) spans 318 to 327 (GERGGPGSRG). Lysine 338 is modified (5-hydroxylysine). Proline 347, proline 356, proline 362, proline 368, proline 377, proline 380, proline 389, proline 398, proline 404, proline 416, proline 425, proline 434, proline 437, proline 455, proline 472, proline 478, proline 484, proline 490, proline 496, proline 502, proline 514, proline 523, proline 534, proline 546, proline 549, proline 555, proline 561, and proline 570 each carry 4-hydroxyproline. Low complexity predominate over residues 371 to 425 (KGLTGSPGSPGPDGKTGPPGPAGQDGRPGPAGPPGARGQAGVMGFPGPKGAAGEP). Positions 484-493 (PGEAGKPGEQ) are enriched in low complexity. Low complexity predominate over residues 536 to 558 (NDGAKGDAGAPGAPGSQGAPGLQ). Residue lysine 582 is modified to 5-hydroxylysine. 4-hydroxyproline occurs at positions 588 and 603. Residues 615–629 (AGPSGPAGPTGARGA) are compositionally biased toward low complexity. Residue serine 618 is modified to Phosphoserine. Proline 630, proline 636, proline 639, proline 648, proline 654, proline 681, and proline 690 each carry 4-hydroxyproline. A compositionally biased stretch (low complexity) spans 642 to 672 (AGFAGPPGADGQPGAKGEPGDAGAKGDAGPS). 5-hydroxylysine is present on lysine 693. Positions 698–714 (SAGPPGATGFPGAAGRV) are enriched in low complexity. 4-hydroxyproline occurs at positions 702 and 708. Proline 716 carries the post-translational modification 3-hydroxyproline. Proline 717, proline 726, proline 729, proline 750, proline 759, proline 768, proline 777, proline 794, proline 803, proline 806, proline 812, proline 827, proline 833, proline 839, proline 848, and proline 854 each carry 4-hydroxyproline. A compositionally biased stretch (low complexity) spans 743–752 (ETGPAGRPGE). Positions 762 to 777 (SGEKGSPGADGPAGAP) are enriched in low complexity. Pro residues predominate over residues 826–836 (PPGPMGPPGLA). The span at 838–853 (PPGEAGREGSPGAEGS) shows a compositional bias: low complexity. Lysine 863 carries the post-translational modification 5-hydroxylysine. Pro residues predominate over residues 871-886 (PGPPGAPGAPGAPGPV). Proline 874, proline 877, and proline 880 each carry 4-hydroxyproline. Positions 907–921 (AGPAGARGPAGPQGP) are enriched in low complexity. Residues 922–936 (RGDKGETGEQGDRGI) show a composition bias toward basic and acidic residues. Residue lysine 925 is modified to 5-hydroxylysine. A 5-hydroxylysine; alternate modification is found at lysine 937. A glycan (O-linked (Gal...) hydroxylysine; alternate) is linked at lysine 937. Proline 952, proline 955, proline 973, and proline 988 each carry 4-hydroxyproline. The span at 955-988 (PGEQGPSGASGPAGPRGPPGSAGTPGKDGLNGLP) shows a compositional bias: low complexity. The residue at position 993 (proline 993) is a 3-hydroxyproline. A 4-hydroxyproline modification is found at proline 994. Residues 1006–1021 (VGPPGPPGPPGPPGPP) show a composition bias toward pro residues. Residue proline 1008 is modified to 3-hydroxyproline. The residue at position 1009 (proline 1009) is a 4-hydroxyproline. Position 1011 is a 3-hydroxyproline (proline 1011). Proline 1012 carries the post-translational modification 4-hydroxyproline. Position 1014 is a 3-hydroxyproline (proline 1014). 4-hydroxyproline is present on residues proline 1015, proline 1018, and proline 1021.

The protein belongs to the fibrillar collagen family. Trimers of one alpha 2(I) and two alpha 1(I) chains. Contains mostly 4-hydroxyproline. Proline residues at the third position of the tripeptide repeating unit (G-X-Y) are hydroxylated in some or all of the chains. Post-translationally, contains 3-hydroxyproline at a few sites. This modification occurs on the first proline residue in the sequence motif Gly-Pro-Hyp, where Hyp is 4-hydroxyproline. In terms of processing, lysine residues at the third position of the tripeptide repeating unit (G-X-Y) are 5-hydroxylated in some or all of the chains. O-glycosylated on hydroxylated lysine residues. The O-linked glycan consists of a Glc-Gal disaccharide. Expressed in bones.

Its subcellular location is the secreted. It localises to the extracellular space. It is found in the extracellular matrix. Functionally, type I collagen is a member of group I collagen (fibrillar forming collagen). The sequence is that of Collagen alpha-1(I) chain from Doedicurus sp. (South American giant glyptodont).